We begin with the raw amino-acid sequence, 86 residues long: Putative protein adenylyltransferase MJ1215 (86 aa).

The GSX(10)DXD motif motif lies at 35–49; it reads GSYARGEQKETSDID. D47, D49, and D79 together coordinate Mg(2+).

The protein belongs to the MntA antitoxin family. As to quaternary structure, probably forms a complex with cognate toxin MJ1216. It depends on Mg(2+) as a cofactor.

It carries out the reaction L-tyrosyl-[protein] + ATP = O-(5'-adenylyl)-L-tyrosyl-[protein] + diphosphate. It catalyses the reaction O-(5'-adenylyl)-L-tyrosyl-[protein] + ATP = O-[5'-(adenylyl-(5'-&gt;3')-adenylyl)]-L-tyrosyl-[protein] + diphosphate. In terms of biological role, probable antitoxin component of a putative type VII toxin-antitoxin (TA) system. Neutralizes cognate toxic MJ1216 by di-AMPylation. The chain is Putative protein adenylyltransferase MJ1215 from Methanocaldococcus jannaschii (strain ATCC 43067 / DSM 2661 / JAL-1 / JCM 10045 / NBRC 100440) (Methanococcus jannaschii).